The primary structure comprises 371 residues: Putative 26S proteasome regulatory subunit homolog MJ1494 (371 aa).

An ATP-binding site is contributed by 161 to 168; that stretch reads GPPGTGKT.

The protein belongs to the AAA ATPase family.

The 26S proteasome is involved in the ATP-dependent degradation of ubiquitinated proteins. The regulatory (or ATPase) complex confers ATP dependency and substrate specificity to the 26S complex. The polypeptide is Putative 26S proteasome regulatory subunit homolog MJ1494 (Methanocaldococcus jannaschii (strain ATCC 43067 / DSM 2661 / JAL-1 / JCM 10045 / NBRC 100440) (Methanococcus jannaschii)).